A 239-amino-acid polypeptide reads, in one-letter code: Leucine rich adaptor protein 1 (239 aa).

LRR repeat units lie at residues 55–83 (LGDK…LVTL) and 93–114 (LLEE…QYSL). A compositionally biased stretch (low complexity) spans 105–116 (SSLTSSQYSLTG). Positions 105–138 (SSLTSSQYSLTGGSPGRSRRGSWDSLPDTSSTDR) are disordered. Residues Ser-118, Ser-126, and Ser-129 each carry the phosphoserine modification.

As to quaternary structure, forms a tripartite complex with CDC42BPA/CDC42BPB and MYO18A acting as an adapter connecting both. Its binding to CDC42BPA/CDC42BPB results in their activation by abolition of their negative autoregulation. Interacts with CDC42BPA and CDC42BPB. In terms of processing, phosphorylated.

The protein resides in the cytoplasm. Acts as an activator of the canonical NF-kappa-B pathway and drive the production of pro-inflammatory cytokines. Promotes the antigen (Ag)-presenting and priming function of dendritic cells via the canonical NF-kappa-B pathway. In concert with MYO18A and CDC42BPA/CDC42BPB, is involved in modulating lamellar actomyosin retrograde flow that is crucial to cell protrusion and migration. Activates CDC42BPA/CDC42BPB and targets it to actomyosin through its interaction with MYO18A, leading to MYL9/MLC2 phosphorylation and MYH9/MYH10-dependent actomyosin assembly in the lamella. In Mus musculus (Mouse), this protein is Leucine rich adaptor protein 1 (Lurap1).